A 427-amino-acid chain; its full sequence is Glutamate-1-semialdehyde 2,1-aminomutase (427 aa).

Position 266 is an N6-(pyridoxal phosphate)lysine (lysine 266).

It belongs to the class-III pyridoxal-phosphate-dependent aminotransferase family. HemL subfamily. In terms of assembly, homodimer. Requires pyridoxal 5'-phosphate as cofactor.

It localises to the cytoplasm. The enzyme catalyses (S)-4-amino-5-oxopentanoate = 5-aminolevulinate. It functions in the pathway porphyrin-containing compound metabolism; protoporphyrin-IX biosynthesis; 5-aminolevulinate from L-glutamyl-tRNA(Glu): step 2/2. This chain is Glutamate-1-semialdehyde 2,1-aminomutase, found in Dechloromonas aromatica (strain RCB).